The sequence spans 1054 residues: MLPSTARDGLYRLSTYLEELEAGELKKFKLFLGIAEDLSQDKIPWGRMEKAGPLEMAQLMVAHMGTREAWLLALSTFQRIHRKDLWERGQGEDLVRVTPNNGLCLFESQSACPLDVSPNAPRKDLQTTYKDYVRRKFQLMEDRNARLGECVNLSNRYTRLLLVKEHSNPIWTQQKFVDVEWERSRTRRHQTSPIQMETLFEPDEERPEPPHTVVLQGAAGMGKSMLAHKVMLDWADGRLFQGRFDYVFYISCRELNRSHTQCSVQDLISSCWPERGISLEDLMQAPDRLLFIIDGFDKLHPSFHDAQGPWCLCWEEKQPTEVLLGSLIRRLLLPQVSLLITTRPCALEKLHGLLEHPRHVEILGFSEEARKEYFYRYFHNTGQASRVLSFLMDYEPLFTMCFVPMVSWVVCTCLKQQLESGELLRQTPRTTTAVYMFYLLSLMQPKPGTPTFKVPANQRGLVSLAAEGLWNQKILFDEQDLGKHGLDGADVSTFLNVNIFQKGIKCEKFYSFIHLSFQEFFAAMYCALNGREAVRRALAEYGFSERNFLALTVHFLFGLLNEEMRCYLERNLGWSISPQVKEEVLAWIQNKAGSEGSTLQHGSLELLSCLYEVQEEDFIQQALSHFQVVVVRSISTKMEHMVCSFCARYCRSTEVLHLHGSAYSTGMEDDPPEPSGVQTQSTYLQERNMLPDVYSAYLSAAVCTNSNLIELALYRNALGSQGVRLLCQGLRHASCKLQNLRLKRCQISGSACQDLAAAVIANRNLIRLDLSDNSIGVPGLELLCEGLQHPRCRLQMIQLRKCLLEAAAGRSLASVLSNNSYLVELDLTGNPLEDSGLKLLCQGLRHPVCRLRTLWLKICHLGQASCEDLASTLKMNQSLLELDLGLNDLGDSGVLLLCEGLSHPDCKLQTLRLGICRLGSVACVGIASVLQVNTCLQELDLSFNDLGDRGLQLLGEGLRHQTCRLQKLWLDNCGLTSKACEDLSSILGISQTLHELYLTNNALGDTGVCLLCKRLRHPGCKLRVLWLFGMDLNKKTHRRMAALRVTKPYLDIGC.

A Pyrin domain is found at 1–95 (MLPSTARDGL…WERGQGEDLV (95 aa)). An FISNA domain is found at 129-201 (YKDYVRRKFQ…SPIQMETLFE (73 aa)). The 318-residue stretch at 211–528 (HTVVLQGAAG…EFFAAMYCAL (318 aa)) folds into the NACHT domain. ATP is bound at residue 217–224 (GAAGMGKS). LRR repeat units lie at residues 821–841 (YLVE…KLLC), 850–871 (RLRT…DLAS), 878–899 (SLLE…LLCE), 907–928 (KLQT…GIAS), 935–955 (CLQE…QLLG), 964–985 (RLQK…DLSS), 992–1013 (TLHE…LLCK), and 1021–1042 (KLRV…RMAA).

The protein belongs to the NLRP family. In terms of assembly, interacts (via pyrin domain) with ASC. Interacts (via pyrin domain) with FAF1 (via UBA domain). Interacts with MAP3K14; this interaction promotes proteasomal degradation of MAP3K14. Interacts with NOD2; this interaction promotes degradation of NOD2 through the ubiquitin-proteasome pathway. Interacts with HSPA1A and HSPA8. Interacts with HSP90AA1. Interacts with TRIM25; this interaction inhibits RIGI-mediated signaling pathway. Mainly expressed in dendritic cells (DCs) and neutrophils.

It is found in the cytoplasm. Its function is as follows. Plays an essential role as an potent mitigator of inflammation. Primarily expressed in dendritic cells and macrophages, inhibits both canonical and non-canonical NF-kappa-B and ERK activation pathways. Functions as a negative regulator of NOD2 by targeting it to degradation via the proteasome pathway. In turn, promotes bacterial tolerance. Also inhibits the RIGI-mediated immune signaling against RNA viruses by reducing the E3 ubiquitin ligase TRIM25-mediated 'Lys-63'-linked RIGI activation but enhancing the E3 ubiquitin ligase RNF125-mediated 'Lys-48'-linked RIGI degradation. Also acts as a negative regulator of inflammatory response to mitigate obesity and obesity-associated diseases in adipose tissue. This is NACHT, LRR and PYD domains-containing protein 12 (Nlrp12) from Mus musculus (Mouse).